The primary structure comprises 130 residues: uncharacterized protein (130 aa).

This is an uncharacterized protein from Orgyia pseudotsugata multicapsid polyhedrosis virus (OpMNPV).